A 685-amino-acid polypeptide reads, in one-letter code: Glycine--tRNA ligase beta subunit (685 aa).

The interval 58 to 77 is disordered; it reads GLTAQSPTTREERKGPRTDA. Residues 66–77 show a composition bias toward basic and acidic residues; it reads TREERKGPRTDA.

The protein belongs to the class-II aminoacyl-tRNA synthetase family. As to quaternary structure, tetramer of two alpha and two beta subunits.

Its subcellular location is the cytoplasm. The enzyme catalyses tRNA(Gly) + glycine + ATP = glycyl-tRNA(Gly) + AMP + diphosphate. The sequence is that of Glycine--tRNA ligase beta subunit from Paracoccus denitrificans (strain Pd 1222).